The primary structure comprises 473 residues: Photosystem II CP43 reaction center protein (473 aa).

A propeptide spanning residues 1–14 (MKTLYSLRRFYHVE) is cleaved from the precursor. The residue at position 15 (Thr15) is an N-acetylthreonine. Phosphothreonine is present on Thr15. 5 helical membrane passes run 69–93 (LFEV…PHLA), 134–155 (LLGP…KDRN), 178–200 (KALF…RKIT), 255–275 (KPFA…LSYS), and 291–312 (WFNN…ASQA). [CaMn4O5] cluster is bound at residue Glu367. The chain crosses the membrane as a helical span at residues 447–471 (RARAAAAGFEKGIDRDFEPVLSMTP).

The protein belongs to the PsbB/PsbC family. PsbC subfamily. As to quaternary structure, PSII is composed of 1 copy each of membrane proteins PsbA, PsbB, PsbC, PsbD, PsbE, PsbF, PsbH, PsbI, PsbJ, PsbK, PsbL, PsbM, PsbT, PsbX, PsbY, PsbZ, Psb30/Ycf12, at least 3 peripheral proteins of the oxygen-evolving complex and a large number of cofactors. It forms dimeric complexes. Binds multiple chlorophylls and provides some of the ligands for the Ca-4Mn-5O cluster of the oxygen-evolving complex. It may also provide a ligand for a Cl- that is required for oxygen evolution. PSII binds additional chlorophylls, carotenoids and specific lipids. serves as cofactor.

The protein localises to the plastid. It is found in the chloroplast thylakoid membrane. In terms of biological role, one of the components of the core complex of photosystem II (PSII). It binds chlorophyll and helps catalyze the primary light-induced photochemical processes of PSII. PSII is a light-driven water:plastoquinone oxidoreductase, using light energy to abstract electrons from H(2)O, generating O(2) and a proton gradient subsequently used for ATP formation. The chain is Photosystem II CP43 reaction center protein from Fagopyrum esculentum subsp. ancestrale (Wild buckwheat).